A 659-amino-acid polypeptide reads, in one-letter code: Macrolide export ATP-binding/permease protein MacB (659 aa).

Residues 10-249 (IELRGIRKRY…QPLLHHAGLS (240 aa)) enclose the ABC transporter domain. 47–54 (GSSGSGKS) provides a ligand contact to ATP. 4 helical membrane-spanning segments follow: residues 287-307 (SLTL…LAIG), 538-558 (LGLV…NVML), 594-614 (ITGG…LVFW), and 619-639 (VFSF…GLIF).

The protein belongs to the ABC transporter superfamily. Macrolide exporter (TC 3.A.1.122) family. As to quaternary structure, homodimer.

The protein resides in the cell inner membrane. Its function is as follows. Non-canonical ABC transporter that contains transmembrane domains (TMD), which form a pore in the inner membrane, and an ATP-binding domain (NBD), which is responsible for energy generation. Confers resistance against macrolides. This chain is Macrolide export ATP-binding/permease protein MacB, found in Nitrosomonas europaea (strain ATCC 19718 / CIP 103999 / KCTC 2705 / NBRC 14298).